Reading from the N-terminus, the 277-residue chain is Phosphatidylserine decarboxylase proenzyme (277 aa).

Catalysis depends on charge relay system; for autoendoproteolytic cleavage activity residues Asp88, His144, and Ser242. The active-site Schiff-base intermediate with substrate; via pyruvic acid; for decarboxylase activity is the Ser242. Pyruvic acid (Ser); by autocatalysis is present on Ser242.

The protein belongs to the phosphatidylserine decarboxylase family. PSD-B subfamily. Prokaryotic type I sub-subfamily. Heterodimer of a large membrane-associated beta subunit and a small pyruvoyl-containing alpha subunit. Pyruvate serves as cofactor. Is synthesized initially as an inactive proenzyme. Formation of the active enzyme involves a self-maturation process in which the active site pyruvoyl group is generated from an internal serine residue via an autocatalytic post-translational modification. Two non-identical subunits are generated from the proenzyme in this reaction, and the pyruvate is formed at the N-terminus of the alpha chain, which is derived from the carboxyl end of the proenzyme. The autoendoproteolytic cleavage occurs by a canonical serine protease mechanism, in which the side chain hydroxyl group of the serine supplies its oxygen atom to form the C-terminus of the beta chain, while the remainder of the serine residue undergoes an oxidative deamination to produce ammonia and the pyruvoyl prosthetic group on the alpha chain. During this reaction, the Ser that is part of the protease active site of the proenzyme becomes the pyruvoyl prosthetic group, which constitutes an essential element of the active site of the mature decarboxylase.

It is found in the cell membrane. It carries out the reaction a 1,2-diacyl-sn-glycero-3-phospho-L-serine + H(+) = a 1,2-diacyl-sn-glycero-3-phosphoethanolamine + CO2. The protein operates within phospholipid metabolism; phosphatidylethanolamine biosynthesis; phosphatidylethanolamine from CDP-diacylglycerol: step 2/2. Functionally, catalyzes the formation of phosphatidylethanolamine (PtdEtn) from phosphatidylserine (PtdSer). The sequence is that of Phosphatidylserine decarboxylase proenzyme from Psychrobacter arcticus (strain DSM 17307 / VKM B-2377 / 273-4).